A 622-amino-acid chain; its full sequence is DNA mismatch repair protein MutL (622 aa).

It belongs to the DNA mismatch repair MutL/HexB family.

Functionally, this protein is involved in the repair of mismatches in DNA. It is required for dam-dependent methyl-directed DNA mismatch repair. May act as a 'molecular matchmaker', a protein that promotes the formation of a stable complex between two or more DNA-binding proteins in an ATP-dependent manner without itself being part of a final effector complex. This is DNA mismatch repair protein MutL from Phenylobacterium zucineum (strain HLK1).